Reading from the N-terminus, the 549-residue chain is Longitudinals lacking protein, isoforms H/M/V (549 aa).

The region spanning 32 to 97 (VDCTLAAEGK…MYRGEVNISQ (66 aa)) is the BTB domain. Disordered regions lie at residues 115-200 (LSDN…SSVL) and 228-340 (SSGP…ASAS). Composition is skewed to low complexity over residues 162-175 (SGDV…SSSP), 228-251 (SSGP…LTST), 263-293 (TSST…QTTS), and 329-340 (NSATGPNPASAS).

Mostly neuronal.

It localises to the nucleus. Functionally, putative transcription factor required for axon growth and guidance in the central and peripheral nervous systems. Repels CNS axons away from the midline by promoting the expression of the midline repellent sli and its receptor robo. This chain is Longitudinals lacking protein, isoforms H/M/V, found in Drosophila melanogaster (Fruit fly).